Here is a 266-residue protein sequence, read N- to C-terminus: Undecaprenyl-diphosphatase (266 aa).

8 helical membrane passes run 4–24 (WLIA…PVSS), 46–66 (VLIQ…RLWG), 82–102 (IGIL…HDFI), 105–125 (VLYE…FILL), 142–162 (YPLK…VPGV), 182–202 (AAEF…AYDL), 216–236 (LIGI…KTVL), and 244–264 (FAPF…LLYI).

This sequence belongs to the UppP family.

It is found in the cell inner membrane. It catalyses the reaction di-trans,octa-cis-undecaprenyl diphosphate + H2O = di-trans,octa-cis-undecaprenyl phosphate + phosphate + H(+). In terms of biological role, catalyzes the dephosphorylation of undecaprenyl diphosphate (UPP). Confers resistance to bacitracin. The chain is Undecaprenyl-diphosphatase from Caulobacter vibrioides (strain ATCC 19089 / CIP 103742 / CB 15) (Caulobacter crescentus).